The following is a 1249-amino-acid chain: ATP-dependent helicase/nuclease subunit A (1249 aa).

Residues 5–482 (TNYTPSQQAV…IVLAENFRSV (478 aa)) enclose the UvrD-like helicase ATP-binding domain. Residue 26-33 (ASAGSGKT) coordinates ATP. In terms of domain architecture, UvrD-like helicase C-terminal spans 521 to 811 (ADMPQTTNLL…NVMTIHGSKG (291 aa)).

It belongs to the helicase family. AddA subfamily. Heterodimer of AddA and AddB/RexB. It depends on Mg(2+) as a cofactor.

It catalyses the reaction Couples ATP hydrolysis with the unwinding of duplex DNA by translocating in the 3'-5' direction.. It carries out the reaction ATP + H2O = ADP + phosphate + H(+). Functionally, the heterodimer acts as both an ATP-dependent DNA helicase and an ATP-dependent, dual-direction single-stranded exonuclease. Recognizes the chi site generating a DNA molecule suitable for the initiation of homologous recombination. The AddA nuclease domain is required for chi fragment generation; this subunit has the helicase and 3' -&gt; 5' nuclease activities. The sequence is that of ATP-dependent helicase/nuclease subunit A from Lactiplantibacillus plantarum (strain ATCC BAA-793 / NCIMB 8826 / WCFS1) (Lactobacillus plantarum).